We begin with the raw amino-acid sequence, 265 residues long: Elongation factor 1-delta (265 aa).

The segment covering 31–54 (MGSASNKPHNSPQSAASALSNSGD) has biased composition (polar residues). Disordered stretches follow at residues 31 to 64 (MGSA…RVAN) and 118 to 155 (KVQV…DAEA). Residues 130 to 153 (GTGEDDDDDDDIDLFGSDNEEEDA) show a composition bias toward acidic residues.

This sequence belongs to the EF-1-beta/EF-1-delta family. EF-1 is composed of 4 subunits: alpha, beta, delta, and gamma.

Its function is as follows. EF-1-beta and EF-1-delta stimulate the exchange of GDP bound to EF-1-alpha to GTP. The protein is Elongation factor 1-delta (eef1d) of Xenopus laevis (African clawed frog).